We begin with the raw amino-acid sequence, 997 residues long: Synaptonemal complex protein 1 (997 aa).

A Mediates head to head self-assembly of N-terminal ends motif is present at residues 102 to 112; the sequence is PMSRLYSKLYK. The Nuclear localization signal signature appears at 118–121; sequence KKWK. 2 coiled-coil regions span residues 121-176 and 212-696; these read KVSI…LIKE and YVDL…KKIS. The segment at 207–363 is interaction with SYCE3; that stretch reads ETRQVYVDLN…YQLTEEKEAQ (157 aa). Residues 698-792 form a required for pH-induced assembly of C-terminal ends into antiparallel tetramers region; sequence EKLLGEVEKA…VSLKKQLEVE (95 aa). The Nuclear localization signal signature appears at 701–704; the sequence is LGEV. Residues 768-806 are a coiled coil; the sequence is KVALETELSNIRNELVSLKKQLEVEKEEKEKLKMEQENT. Residues 805-997 form a DNA-binding region; sequence NTAILTDKKD…RLKEAEKLFT (193 aa). At S824 the chain carries Phosphoserine. Positions 828–863 are disordered; the sequence is TSWKFDSKTTPSQNISRLSSSMDSGKSKDNRDSLRA. Residues 835–851 are compositionally biased toward polar residues; it reads KTTPSQNISRLSSSMDS. Residues 852–861 show a composition bias toward basic and acidic residues; it reads GKSKDNRDSL. A Nuclear localization signal motif is present at residues 902–905; sequence KKRK. Phosphothreonine is present on T940.

In terms of assembly, structural component of synaptonemal complexes. Homotetramer that consists of an N-terminal four-helical bundle that bifurcates into two elongated C-terminal dimeric coiled coils. This tetrameric building block potentially self-assembles into a supramolecular zipper-like lattice to mediate meiotic chromosome synapsis. Self-assembly is likely initiated by local proton density at chromosome axis, which is predicted to trigger antiparallel back to back assembly of adjacent C-terminal ends into tetrameric structures that anchor to chromosomal DNA. Then the N-terminal ends are predicted to undergo cooperative antiparallel head to head assembly at the midline of synaptonemal complexes central element to form a zipper-like lattice between properly aligned homologous chromosomes. The nascent synapsis generated by SYCP1 is stabilized through interaction with central element proteins SYCE1 and SYCE2. Interacts (via tetrameric core) with SYCE3; the interaction remodels SYCP1 homotetramers to 2:1 heterotrimers with SYCE3. SYCP1/SYCE3 heterotrimers form lattice assemblies as part of the mature synaptonemal complex via both lateral and head-to-head interactions. Forms a complex with EWSR1, PRDM9, SYCP3 and REC8; complex formation is dependent of phosphorylated form of REC8 and requires PRDM9 bound to hotspot DNA; EWSR1 joins PRDM9 with the chromosomal axis through REC8. Interacts with SPO16. Testis.

The protein resides in the nucleus. It localises to the chromosome. It is found in the centromere. In terms of biological role, major component of the transverse filaments of synaptonemal complexes, formed between homologous chromosomes during meiotic prophase. Required for normal assembly of the central element of the synaptonemal complexes. Required for normal centromere pairing during meiosis. Required for normal meiotic chromosome synapsis during oocyte and spermatocyte development and for normal male and female fertility. This chain is Synaptonemal complex protein 1, found in Rattus norvegicus (Rat).